Reading from the N-terminus, the 742-residue chain is uncharacterized protein (742 aa).

The tract at residues 167–471 (GIVPPEPWGH…AAGAAGGGGA (305 aa)) is disordered. Residues 205-218 (PAPPPSLFAPPPPS) are compositionally biased toward pro residues. Polar residues-rich tracts occupy residues 318 to 331 (SPAT…NAVS) and 358 to 368 (GSPQTLSTAPS). Residues 386-401 (TAGPAAPPTTGGPPAP) show a composition bias toward pro residues. Residues 421-432 (PLSGGVPGGAVP) show a composition bias toward low complexity. A compositionally biased stretch (pro residues) spans 433–447 (LGPPPTPPPAAPVTT). A compositionally biased stretch (low complexity) spans 448-464 (PPLASGAPVAPTGAAAG).

In terms of biological role, may be involved in the ESX-1 / type VII specialized secretion system (T7SS), which exports several proteins including EsxA and EsxB. Involved in DNA conjugation in the recipient strain. This is an uncharacterized protein from Mycolicibacterium smegmatis (strain MKD8) (Mycobacterium smegmatis).